A 391-amino-acid polypeptide reads, in one-letter code: Pectate lyase B (391 aa).

An N-terminal signal peptide occupies residues Met1–Ala30. Ca(2+) contacts are provided by Asp181, Asp203, and Asp207. Arg305 is a catalytic residue.

Belongs to the polysaccharide lyase 1 family. Ca(2+) serves as cofactor.

It is found in the secreted. It catalyses the reaction Eliminative cleavage of (1-&gt;4)-alpha-D-galacturonan to give oligosaccharides with 4-deoxy-alpha-D-galact-4-enuronosyl groups at their non-reducing ends.. The enzyme catalyses Eliminative cleavage of (1-&gt;4)-alpha-D-galacturonan methyl ester to give oligosaccharides with 4-deoxy-6-O-methyl-alpha-D-galact-4-enuronosyl groups at their non-reducing ends.. Its pathway is glycan metabolism; pectin degradation. In terms of biological role, catalyzes the depolymerization of both polygalacturonate and pectins of various methyl esterification degree, with an endo mode of action. Shows the highest activity on 20 to 34% methylated pectin but retains 67%, 51%, 25%, and 1% of its maximum activity on polygalacturonate and 8.5%, 55 to 70%, and 90% methylated pectin, respectively. The protein is Pectate lyase B of Paenibacillus amylolyticus.